We begin with the raw amino-acid sequence, 81 residues long: Small ribosomal subunit protein bS18A (81 aa).

Belongs to the bacterial ribosomal protein bS18 family. As to quaternary structure, part of the 30S ribosomal subunit. Forms a tight heterodimer with protein bS6.

Its function is as follows. Binds as a heterodimer with protein bS6 to the central domain of the 16S rRNA, where it helps stabilize the platform of the 30S subunit. This chain is Small ribosomal subunit protein bS18A, found in Saccharopolyspora erythraea (strain ATCC 11635 / DSM 40517 / JCM 4748 / NBRC 13426 / NCIMB 8594 / NRRL 2338).